We begin with the raw amino-acid sequence, 308 residues long: Acetylglutamate kinase (308 aa).

Residues 64–65 (GG), Arg86, and Asn192 each bind substrate.

Belongs to the acetylglutamate kinase family. ArgB subfamily.

The protein localises to the cytoplasm. It catalyses the reaction N-acetyl-L-glutamate + ATP = N-acetyl-L-glutamyl 5-phosphate + ADP. It participates in amino-acid biosynthesis; L-arginine biosynthesis; N(2)-acetyl-L-ornithine from L-glutamate: step 2/4. Catalyzes the ATP-dependent phosphorylation of N-acetyl-L-glutamate. This is Acetylglutamate kinase from Myxococcus xanthus (strain DK1622).